The sequence spans 468 residues: UDP-N-acetylmuramate--L-alanine ligase (468 aa).

112–118 (GTHGKTT) contributes to the ATP binding site.

It belongs to the MurCDEF family.

The protein resides in the cytoplasm. The catalysed reaction is UDP-N-acetyl-alpha-D-muramate + L-alanine + ATP = UDP-N-acetyl-alpha-D-muramoyl-L-alanine + ADP + phosphate + H(+). The protein operates within cell wall biogenesis; peptidoglycan biosynthesis. Cell wall formation. The sequence is that of UDP-N-acetylmuramate--L-alanine ligase from Bordetella pertussis (strain Tohama I / ATCC BAA-589 / NCTC 13251).